Here is a 126-residue protein sequence, read N- to C-terminus: Aspartate 1-decarboxylase (126 aa).

The Schiff-base intermediate with substrate; via pyruvic acid role is filled by Ser25. Pyruvic acid (Ser) is present on Ser25. Thr57 provides a ligand contact to substrate. The Proton donor role is filled by Tyr58. Residue 73–75 coordinates substrate; it reads GAA.

It belongs to the PanD family. In terms of assembly, heterooctamer of four alpha and four beta subunits. The cofactor is pyruvate. Is synthesized initially as an inactive proenzyme, which is activated by self-cleavage at a specific serine bond to produce a beta-subunit with a hydroxyl group at its C-terminus and an alpha-subunit with a pyruvoyl group at its N-terminus.

It localises to the cytoplasm. It carries out the reaction L-aspartate + H(+) = beta-alanine + CO2. It functions in the pathway cofactor biosynthesis; (R)-pantothenate biosynthesis; beta-alanine from L-aspartate: step 1/1. Functionally, catalyzes the pyruvoyl-dependent decarboxylation of aspartate to produce beta-alanine. This is Aspartate 1-decarboxylase from Psychromonas ingrahamii (strain DSM 17664 / CCUG 51855 / 37).